The primary structure comprises 83 residues: Cytochrome b559 subunit alpha (83 aa).

Residues 21-35 traverse the membrane as a helical segment; sequence VIHSITIPSLFIAGW. Position 23 (His23) interacts with heme.

This sequence belongs to the PsbE/PsbF family. In terms of assembly, heterodimer of an alpha subunit and a beta subunit. PSII is composed of 1 copy each of membrane proteins PsbA, PsbB, PsbC, PsbD, PsbE, PsbF, PsbH, PsbI, PsbJ, PsbK, PsbL, PsbM, PsbT, PsbX, PsbY, PsbZ, Psb30/Ycf12, at least 3 peripheral proteins of the oxygen-evolving complex and a large number of cofactors. It forms dimeric complexes. The cofactor is heme b.

The protein localises to the plastid. Its subcellular location is the chloroplast thylakoid membrane. Its function is as follows. This b-type cytochrome is tightly associated with the reaction center of photosystem II (PSII). PSII is a light-driven water:plastoquinone oxidoreductase that uses light energy to abstract electrons from H(2)O, generating O(2) and a proton gradient subsequently used for ATP formation. It consists of a core antenna complex that captures photons, and an electron transfer chain that converts photonic excitation into a charge separation. The chain is Cytochrome b559 subunit alpha from Piper cenocladum (Ant piper).